Reading from the N-terminus, the 370-residue chain is Histidinol-phosphate aminotransferase 1 (370 aa).

The residue at position 222 (Lys222) is an N6-(pyridoxal phosphate)lysine.

The protein belongs to the class-II pyridoxal-phosphate-dependent aminotransferase family. Histidinol-phosphate aminotransferase subfamily. As to quaternary structure, homodimer. Pyridoxal 5'-phosphate serves as cofactor.

The catalysed reaction is L-histidinol phosphate + 2-oxoglutarate = 3-(imidazol-4-yl)-2-oxopropyl phosphate + L-glutamate. Its pathway is amino-acid biosynthesis; L-histidine biosynthesis; L-histidine from 5-phospho-alpha-D-ribose 1-diphosphate: step 7/9. This is Histidinol-phosphate aminotransferase 1 from Bacillus cereus (strain ZK / E33L).